The sequence spans 674 residues: DNA-directed RNA polymerase subunit beta' (674 aa).

Cys-69, Cys-71, Cys-87, and Cys-90 together coordinate Zn(2+). Mg(2+) contacts are provided by Asp-494, Asp-496, and Asp-498.

Belongs to the RNA polymerase beta' chain family. RpoC1 subfamily. In plastids the minimal PEP RNA polymerase catalytic core is composed of four subunits: alpha, beta, beta', and beta''. When a (nuclear-encoded) sigma factor is associated with the core the holoenzyme is formed, which can initiate transcription. Requires Mg(2+) as cofactor. Zn(2+) is required as a cofactor.

The protein localises to the plastid. It is found in the chloroplast. The enzyme catalyses RNA(n) + a ribonucleoside 5'-triphosphate = RNA(n+1) + diphosphate. DNA-dependent RNA polymerase catalyzes the transcription of DNA into RNA using the four ribonucleoside triphosphates as substrates. In Psilotum nudum (Whisk fern), this protein is DNA-directed RNA polymerase subunit beta'.